The sequence spans 526 residues: Peptide chain release factor 3 (526 aa).

The tr-type G domain maps to aspartate 9–leucine 277. GTP contacts are provided by residues serine 18–threonine 25, aspartate 86–histidine 90, and asparagine 140–aspartate 143.

The protein belongs to the TRAFAC class translation factor GTPase superfamily. Classic translation factor GTPase family. PrfC subfamily.

The protein localises to the cytoplasm. In terms of biological role, increases the formation of ribosomal termination complexes and stimulates activities of RF-1 and RF-2. It binds guanine nucleotides and has strong preference for UGA stop codons. It may interact directly with the ribosome. The stimulation of RF-1 and RF-2 is significantly reduced by GTP and GDP, but not by GMP. This is Peptide chain release factor 3 from Shewanella sp. (strain ANA-3).